Here is a 57-residue protein sequence, read N- to C-terminus: Phospholipase A2 superbin b (57 aa).

Residues Tyr28, Gly30, and Gly32 each contribute to the Ca(2+) site. A disulfide bond links Cys29 and Cys45. Residue His48 is part of the active site. Asp49 lines the Ca(2+) pocket.

Ca(2+) is required as a cofactor. In terms of tissue distribution, expressed by the venom gland.

The protein resides in the secreted. It catalyses the reaction a 1,2-diacyl-sn-glycero-3-phosphocholine + H2O = a 1-acyl-sn-glycero-3-phosphocholine + a fatty acid + H(+). Its function is as follows. Snake venom phospholipase A2 (PLA2) that inhibits collagen-induced platelet aggregation. In terms of inhibition of platelet aggregation, superbin b is more potent as superbin c, and d. PLA2 catalyzes the calcium-dependent hydrolysis of the 2-acyl groups in 3-sn-phosphoglycerides. This Austrelaps superbus (Lowland copperhead snake) protein is Phospholipase A2 superbin b.